We begin with the raw amino-acid sequence, 280 residues long: Pyridoxal 5'-phosphate synthase subunit PdxS (280 aa).

Aspartate 12 serves as a coordination point for D-ribose 5-phosphate. Lysine 69 serves as the catalytic Schiff-base intermediate with D-ribose 5-phosphate. Glycine 141 provides a ligand contact to D-ribose 5-phosphate. Arginine 153 is a D-glyceraldehyde 3-phosphate binding site. D-ribose 5-phosphate contacts are provided by residues glycine 202 and 223 to 224 (GS).

It belongs to the PdxS/SNZ family. As to quaternary structure, in the presence of PdxT, forms a dodecamer of heterodimers.

It catalyses the reaction aldehydo-D-ribose 5-phosphate + D-glyceraldehyde 3-phosphate + L-glutamine = pyridoxal 5'-phosphate + L-glutamate + phosphate + 3 H2O + H(+). Its pathway is cofactor biosynthesis; pyridoxal 5'-phosphate biosynthesis. Its function is as follows. Catalyzes the formation of pyridoxal 5'-phosphate from ribose 5-phosphate (RBP), glyceraldehyde 3-phosphate (G3P) and ammonia. The ammonia is provided by the PdxT subunit. Can also use ribulose 5-phosphate and dihydroxyacetone phosphate as substrates, resulting from enzyme-catalyzed isomerization of RBP and G3P, respectively. In Fusobacterium nucleatum subsp. nucleatum (strain ATCC 25586 / DSM 15643 / BCRC 10681 / CIP 101130 / JCM 8532 / KCTC 2640 / LMG 13131 / VPI 4355), this protein is Pyridoxal 5'-phosphate synthase subunit PdxS.